Here is a 436-residue protein sequence, read N- to C-terminus: Tol-Pal system protein TolB (436 aa).

The N-terminal stretch at 1–28 (MEMLRRNFFRLLMVLVAGCGLIASPAKA) is a signal peptide.

This sequence belongs to the TolB family. As to quaternary structure, the Tol-Pal system is composed of five core proteins: the inner membrane proteins TolA, TolQ and TolR, the periplasmic protein TolB and the outer membrane protein Pal. They form a network linking the inner and outer membranes and the peptidoglycan layer.

It is found in the periplasm. Part of the Tol-Pal system, which plays a role in outer membrane invagination during cell division and is important for maintaining outer membrane integrity. The sequence is that of Tol-Pal system protein TolB from Sinorhizobium medicae (strain WSM419) (Ensifer medicae).